Here is a 364-residue protein sequence, read N- to C-terminus: Uroporphyrinogen decarboxylase (364 aa).

Residues 28-32 (RQAGR), aspartate 78, tyrosine 160, threonine 215, and histidine 333 each bind substrate.

It belongs to the uroporphyrinogen decarboxylase family. As to quaternary structure, homodimer.

Its subcellular location is the cytoplasm. The enzyme catalyses uroporphyrinogen III + 4 H(+) = coproporphyrinogen III + 4 CO2. Its pathway is porphyrin-containing compound metabolism; protoporphyrin-IX biosynthesis; coproporphyrinogen-III from 5-aminolevulinate: step 4/4. Functionally, catalyzes the decarboxylation of four acetate groups of uroporphyrinogen-III to yield coproporphyrinogen-III. In Burkholderia cenocepacia (strain ATCC BAA-245 / DSM 16553 / LMG 16656 / NCTC 13227 / J2315 / CF5610) (Burkholderia cepacia (strain J2315)), this protein is Uroporphyrinogen decarboxylase.